The chain runs to 209 residues: 3-demethoxyubiquinol 3-hydroxylase (209 aa).

Residues E58, E88, H91, E140, E172, and H175 each contribute to the Fe cation site.

The protein belongs to the COQ7 family. Fe cation is required as a cofactor.

The protein resides in the cell membrane. It carries out the reaction a 5-methoxy-2-methyl-3-(all-trans-polyprenyl)benzene-1,4-diol + AH2 + O2 = a 3-demethylubiquinol + A + H2O. It participates in cofactor biosynthesis; ubiquinone biosynthesis. In terms of biological role, catalyzes the hydroxylation of 2-nonaprenyl-3-methyl-6-methoxy-1,4-benzoquinol during ubiquinone biosynthesis. The sequence is that of 3-demethoxyubiquinol 3-hydroxylase from Polynucleobacter necessarius subsp. necessarius (strain STIR1).